We begin with the raw amino-acid sequence, 553 residues long: Cysteine desulfurase IscS (553 aa).

The segment covering 102 to 122 (NNISSNNTQYNNNSSNSGSLN) has biased composition (low complexity). The segment at 102 to 125 (NNISSNNTQYNNNSSNSGSLNDEG) is disordered.

Belongs to the class-V pyridoxal-phosphate-dependent aminotransferase family. NifS/IscS subfamily. In terms of assembly, homotetramer. Interacts with Isd11; the interaction enhances cysteine desulfurase activity of IscS. Interacts with IscU. Component of a complex, at least composed of IscS, Isd11 and IscU. Pyridoxal 5'-phosphate serves as cofactor.

The protein localises to the mitochondrion. It carries out the reaction (sulfur carrier)-H + L-cysteine = (sulfur carrier)-SH + L-alanine. It participates in cofactor biosynthesis; iron-sulfur cluster biosynthesis. Catalyzes sulfur activation and mobilization in iron-sulfur cluster formation (ISC) pathway for iron-sulfur (Fe-S) cluster biogenesis. Active when in complex with a partner protein Isd11. The chain is Cysteine desulfurase IscS from Plasmodium falciparum (isolate 3D7).